Here is a 413-residue protein sequence, read N- to C-terminus: Peptide chain release factor 1, mitochondrial (413 aa).

The transit peptide at 1 to 40 directs the protein to the mitochondrion; it reads MRVLIRPNFLSNLIRYCSRGTHSHDRSLRSVLSSNMIRLY. Gln-287 carries the N5-methylglutamine modification.

Belongs to the prokaryotic/mitochondrial release factor family. In terms of processing, methylation increases the termination efficiency of RF1. Mostly expressed in seedlings, stems and adult plants, and, to a lower extent, in siliques. Barely detected in etiolated seedlings and roots.

Its subcellular location is the mitochondrion. Its function is as follows. Peptide chain release factor 1 directs the termination of translation in response to the peptide chain termination codons UAG and UAA in mitochondria. This is Peptide chain release factor 1, mitochondrial from Arabidopsis thaliana (Mouse-ear cress).